The primary structure comprises 1553 residues: Sodium channel protein PaFPC1 (1553 aa).

The segment at Met-1 to Gln-68 is disordered. The Cytoplasmic portion of the chain corresponds to Met-1–Pro-140. The span at Glu-34–Ala-60 shows a compositional bias: basic and acidic residues. The helical transmembrane segment at Ile-141–Met-159 threads the bilayer. Over Pro-160–Thr-165 the chain is Extracellular. The chain crosses the membrane as a helical span at residues Tyr-166–Ala-186. The Cytoplasmic segment spans residues Arg-187–Pro-200. The chain crosses the membrane as a helical span at residues Trp-201–Val-218. Residues Asp-219–Tyr-224 lie on the Extracellular side of the membrane. A helical transmembrane segment spans residues Ala-225 to Val-241. Residues Pro-242–Asp-260 are Cytoplasmic-facing. The helical transmembrane segment at Leu-261–Tyr-280 threads the bilayer. At Met-281–Thr-360 the chain is on the extracellular side. 2 disulfide bridges follow: Cys-288-Cys-337 and Cys-328-Cys-343. N-linked (GlcNAc...) asparagine glycans are attached at residues Asn-300, Asn-308, Asn-312, and Asn-330. Residues Phe-361 to Leu-385 constitute an intramembrane region (pore-forming). Glu-378 is a binding site for saxitoxin. At Arg-386–His-392 the chain is on the extracellular side. The helical transmembrane segment at Ile-393 to Ala-413 threads the bilayer. At Val-414 to Pro-519 the chain is on the cytoplasmic side. Residues Phe-520 to Leu-538 traverse the membrane as a helical segment. Residues Asp-539–Arg-549 lie on the Extracellular side of the membrane. The helical transmembrane segment at Ile-550–Lys-569 threads the bilayer. Over Ile-570–Trp-583 the chain is Cytoplasmic. The helical transmembrane segment at Asn-584–Val-603 threads the bilayer. Residues Gln-604–Gly-605 are Extracellular-facing. The chain crosses the membrane as a helical span at residues Leu-606–Phe-623. At Trp-624 to Gly-639 the chain is on the cytoplasmic side. A helical membrane pass occupies residues Ala-640–Ile-658. The Extracellular segment spans residues Gly-659–Asp-686. Residue Asn-683 is glycosylated (N-linked (GlcNAc...) asparagine). The segment at residues Phe-687 to Trp-707 is an intramembrane region (pore-forming). Residues Glu-701 and Glu-704 each coordinate tetrodotoxin. Saxitoxin is bound at residue Glu-704. Over Asp-708 to Pro-719 the chain is Extracellular. Cys-709 and Cys-717 are disulfide-bonded. A helical transmembrane segment spans residues Phe-720–Leu-740. Topologically, residues Leu-741–Tyr-857 are cytoplasmic. The chain crosses the membrane as a helical span at residues Phe-858–Leu-875. The Extracellular segment spans residues Glu-876–Asn-888. The helical transmembrane segment at Ile-889–Ile-907 threads the bilayer. At Met-908–Lys-921 the chain is on the cytoplasmic side. Residues Trp-922–Met-940 form a helical membrane-spanning segment. The Extracellular segment spans residues Cys-941–Glu-945. Residues Ala-946–Lys-964 form a helical membrane-spanning segment. The Cytoplasmic segment spans residues Val-965 to His-981. Residues Ile-982–Val-1001 traverse the membrane as a helical segment. Residues Gln-1002–Val-1047 are Extracellular-facing. An intrachain disulfide couples Cys-1011 to Cys-1030. The N-linked (GlcNAc...) asparagine glycan is linked to Asn-1015. Asn-1028 is a glycosylation site (N-linked (GlcNAc...) asparagine; atypical). The N-linked (GlcNAc...) asparagine glycan is linked to Asn-1034. The pore-forming intramembrane region spans Gly-1048–Asp-1069. Residue Gly-1062 participates in tetrodotoxin binding. A saxitoxin-binding site is contributed by Trp-1063. The Extracellular portion of the chain corresponds to Ala-1070 to Ile-1086. The chain crosses the membrane as a helical span at residues Tyr-1087 to Val-1108. Over Cys-1109–Lys-1171 the chain is Cytoplasmic. The segment at Gln-1133 to Ala-1146 is linker region that may regulate channel inactivation. A helical membrane pass occupies residues Phe-1172–Ile-1189. Topologically, residues Asp-1190–Glu-1200 are extracellular. Residues Val-1201–Ile-1219 traverse the membrane as a helical segment. The Cytoplasmic segment spans residues Lys-1220–Asp-1231. A helical transmembrane segment spans residues Pro-1232 to Met-1249. Over Leu-1250–Thr-1262 the chain is Extracellular. A helical transmembrane segment spans residues Leu-1263–Phe-1279. At Gln-1280–Thr-1298 the chain is on the cytoplasmic side. Residues Leu-1299–Phe-1316 form a helical membrane-spanning segment. Topologically, residues Gly-1317–Thr-1338 are extracellular. An intramembrane region (pore-forming) is located at residues Phe-1339–Ala-1361. Tetrodotoxin contacts are provided by Gly-1354 and Asp-1356. Residue Asp-1356 participates in saxitoxin binding. Topologically, residues Ile-1362–Gly-1387 are extracellular. Cys-1368 and Cys-1381 are disulfide-bonded. A helical membrane pass occupies residues Ile-1388–Ile-1410. Residues Leu-1411 to Asn-1553 lie on the Cytoplasmic side of the membrane.

Belongs to the sodium channel (TC 1.A.1.10) family. Detected in adult nerve cord, muscle, gut and mushroom-shaped accessory glands.

The protein localises to the cell membrane. With respect to regulation, inhibited by the pore blockers saxitoxin and tetrodotoxin. In terms of biological role, mediates the voltage-dependent sodium ion permeability of excitable membranes. The chain is Sodium channel protein PaFPC1 from Periplaneta americana (American cockroach).